The primary structure comprises 243 residues: Chromosome partition protein MukE (243 aa).

The segment at 214 to 243 (DSLALEKQADLNEVDDNDELEDELDDEEHA) is disordered. Residues 225 to 243 (NEVDDNDELEDELDDEEHA) show a composition bias toward acidic residues.

Belongs to the MukE family. In terms of assembly, interacts, and probably forms a ternary complex, with MukF and MukB. The complex formation is stimulated by calcium or magnesium.

It is found in the cytoplasm. The protein resides in the nucleoid. In terms of biological role, involved in chromosome condensation, segregation and cell cycle progression. May participate in facilitating chromosome segregation by condensation DNA from both sides of a centrally located replisome during cell division. Probably acts via its interaction with MukB and MukF. The protein is Chromosome partition protein MukE of Pasteurella multocida (strain Pm70).